Here is a 327-residue protein sequence, read N- to C-terminus: Ribosomal RNA small subunit methyltransferase H (327 aa).

S-adenosyl-L-methionine-binding positions include 36 to 38, Asp61, Phe88, Asp114, and Gln121; that span reads GGH.

It belongs to the methyltransferase superfamily. RsmH family.

It localises to the cytoplasm. The catalysed reaction is cytidine(1402) in 16S rRNA + S-adenosyl-L-methionine = N(4)-methylcytidine(1402) in 16S rRNA + S-adenosyl-L-homocysteine + H(+). Its function is as follows. Specifically methylates the N4 position of cytidine in position 1402 (C1402) of 16S rRNA. This chain is Ribosomal RNA small subunit methyltransferase H, found in Chlorobium phaeovibrioides (strain DSM 265 / 1930) (Prosthecochloris vibrioformis (strain DSM 265)).